Here is an 88-residue protein sequence, read N- to C-terminus: Small ribosomal subunit protein bS16c (88 aa).

The protein belongs to the bacterial ribosomal protein bS16 family.

The protein resides in the plastid. Its subcellular location is the chloroplast. The chain is Small ribosomal subunit protein bS16c from Citrus sinensis (Sweet orange).